Reading from the N-terminus, the 236-residue chain is Small ribosomal subunit protein uS2c (236 aa).

It belongs to the universal ribosomal protein uS2 family.

The protein resides in the plastid. Its subcellular location is the chloroplast. This is Small ribosomal subunit protein uS2c (rps2) from Lemna minor (Common duckweed).